The sequence spans 208 residues: Cytochrome c biogenesis ATP-binding export protein CcmA (208 aa).

The region spanning Leu-3–Lys-206 is the ABC transporter domain. Gly-35–Ser-42 contributes to the ATP binding site.

Belongs to the ABC transporter superfamily. CcmA exporter (TC 3.A.1.107) family. In terms of assembly, the complex is composed of two ATP-binding proteins (CcmA) and two transmembrane proteins (CcmB).

It is found in the cell inner membrane. The enzyme catalyses heme b(in) + ATP + H2O = heme b(out) + ADP + phosphate + H(+). In terms of biological role, part of the ABC transporter complex CcmAB involved in the biogenesis of c-type cytochromes; once thought to export heme, this seems not to be the case, but its exact role is uncertain. Responsible for energy coupling to the transport system. This chain is Cytochrome c biogenesis ATP-binding export protein CcmA, found in Bartonella henselae (strain ATCC 49882 / DSM 28221 / CCUG 30454 / Houston 1) (Rochalimaea henselae).